The sequence spans 243 residues: 23S rRNA (guanosine-2'-O-)-methyltransferase RlmB (243 aa).

S-adenosyl-L-methionine contacts are provided by Gly-196, Ile-216, and Leu-225.

It belongs to the class IV-like SAM-binding methyltransferase superfamily. RNA methyltransferase TrmH family. RlmB subfamily. Homodimer.

The protein resides in the cytoplasm. It catalyses the reaction guanosine(2251) in 23S rRNA + S-adenosyl-L-methionine = 2'-O-methylguanosine(2251) in 23S rRNA + S-adenosyl-L-homocysteine + H(+). In terms of biological role, specifically methylates the ribose of guanosine 2251 in 23S rRNA. The protein is 23S rRNA (guanosine-2'-O-)-methyltransferase RlmB of Shigella flexneri.